A 343-amino-acid polypeptide reads, in one-letter code: Cytoplasmic tRNA 2-thiolation protein 1 (343 aa).

This sequence belongs to the TtcA family. CTU1/NCS6/ATPBD3 subfamily.

The protein resides in the cytoplasm. The protein operates within tRNA modification; 5-methoxycarbonylmethyl-2-thiouridine-tRNA biosynthesis. Plays a central role in 2-thiolation of mcm(5)S(2)U at tRNA wobble positions of tRNA(Lys), tRNA(Glu) and tRNA(Gln). Directly binds tRNAs and probably acts by catalyzing adenylation of tRNAs, an intermediate required for 2-thiolation. It is unclear whether it acts as a sulfurtransferase that transfers sulfur from thiocarboxylated URM1 onto the uridine of tRNAs at wobble position. The chain is Cytoplasmic tRNA 2-thiolation protein 1 from Drosophila willistoni (Fruit fly).